Here is a 157-residue protein sequence, read N- to C-terminus: MSQVILDLQLACADNSGLPDEATFQRWLEGVLPQFQEEAEVTIRLVDEAESNELNLTYRGMDKPTNVLSFPFEAPPGIELPLLGDLIICRQVVEREAAEQDKALEAHWAHMVVHGSLHLLGYDHIEDDEAEEMESLETEIMHGLGYPDPYLAEKDPL.

Zn(2+) is bound by residues H114, H118, and H124.

This sequence belongs to the endoribonuclease YbeY family. The cofactor is Zn(2+).

The protein resides in the cytoplasm. In terms of biological role, single strand-specific metallo-endoribonuclease involved in late-stage 70S ribosome quality control and in maturation of the 3' terminus of the 16S rRNA. The protein is Endoribonuclease YbeY of Serratia proteamaculans (strain 568).